The sequence spans 130 residues: Protein UL145 (130 aa).

In terms of assembly, interacts with host DDB1; this interaction promotes STAT2 degradation.

Functionally, plays a role in the inhibition of host innate immunity by exploiting host DDB1-cullin RING ubiquitin ligases (CRLs). Mechanistically, recruits host DDB1 via a DCAF-like interaction motif to antagonize IFN signaling by STAT2 degradation. The sequence is that of Protein UL145 (UL145) from Homo sapiens (Human).